The following is a 486-amino-acid chain: Coronin-1B (486 aa).

A Phosphoserine; by PKC modification is found at S2. WD repeat units lie at residues 80–120, 130–170, 174–213, 217–260, and 265–305; these read GHTG…LTSP, GHTK…ELYR, LHPDLIYNVSWNRNGSLFCSACKDKSVRIIDPRRGTLVAE, AHEG…EPMA, and DSSN…PYIH. Residues 404 to 444 form a disordered region; sequence LKVSRRNVLSDSRPTSAARPAAPAPAAPAPAAAASSSLSGA. Residues 432–444 show a composition bias toward low complexity; the sequence is APAAAASSSLSGA. Residues 446–484 are a coiled coil; sequence EAGKLEEVMRELRALRALVKEQGERIGRLEEQLGRVENG.

It belongs to the WD repeat coronin family. As to quaternary structure, forms homooligomers, but does not form complexes with the other coronins. Interacts with Arp2/3 complex components, including ACTR2, ARPC1B and ARPC2. Binds actin. In terms of processing, phosphorylated in vivo by PKC in response to cholinergic stimulation. Phosphorylation on Ser-2 regulates the interaction with the Arp2/3 complex and cell motility in fibroblasts. Phosphorylation does not seem to affect subcellular location.

Its subcellular location is the cytoplasm. The protein localises to the cytoskeleton. It is found in the stress fiber. In terms of biological role, regulates leading edge dynamics and cell motility in fibroblasts. May be involved in cytokinesis and signal transduction. The sequence is that of Coronin-1B (CORO1B) from Oryctolagus cuniculus (Rabbit).